Here is a 309-residue protein sequence, read N- to C-terminus: Olfactory receptor 1A2 (309 aa).

Over 1–25 (MKKENQSFNLDFILLGVTSQQEQNN) the chain is Extracellular. A glycan (N-linked (GlcNAc...) asparagine) is linked at N5. A helical transmembrane segment spans residues 26 to 49 (VFFVIFLCIYPITLTGNLLIILAI). At 50–57 (CADIRLHN) the chain is on the cytoplasmic side. The helical transmembrane segment at 58–79 (PMYFLLANLSLVDIIFSSVTIP) threads the bilayer. Residues 80-100 (KVLANHLLGSKFISFGGCLMQ) are Extracellular-facing. C97 and C189 are disulfide-bonded. A helical transmembrane segment spans residues 101 to 120 (MYFMIALAKADSYTLAAMAY). The Cytoplasmic segment spans residues 121 to 139 (DRAVAISCPLHYTTIMSPR). The helical transmembrane segment at 140-158 (SCILLIAGSWVIGNTSALP) threads the bilayer. Residues 159 to 195 (HTLLTASLSFCGNQEVANFYCDIMPLLKLSCSDVHFN) are Extracellular-facing. A helical transmembrane segment spans residues 196 to 218 (VKMMYLGVGVFSLPLLCIIVSYV). Over 219 to 235 (QVFSTVFQVPSTKSLFK) the chain is Cytoplasmic. The chain crosses the membrane as a helical span at residues 236–258 (AFCTCGSHLTVVFLYYGTTMGMY). Over 259-270 (FRPLTSYSPKDA) the chain is Extracellular. Residues 271 to 290 (VITVMYVAVTPALNPFIYSL) traverse the membrane as a helical segment. Topologically, residues 291–309 (RNWDMKAALQKLFSKRISS) are cytoplasmic.

This sequence belongs to the G-protein coupled receptor 1 family.

It is found in the cell membrane. Functionally, odorant receptor. The protein is Olfactory receptor 1A2 (OR1A2) of Homo sapiens (Human).